The primary structure comprises 873 residues: Bifunctional uridylyltransferase/uridylyl-removing enzyme (873 aa).

Residues 1–332 are uridylyltransferase; the sequence is MAFQSPLTFN…NGGETEPAVI (332 aa). The interval 333–692 is uridylyl-removing; that stretch reads INEDFQRRGR…MSKKATRGGT (360 aa). The 123-residue stretch at 451 to 573 folds into the HD domain; that stretch reads VDEHSVRLLN…VRDEERLEYL (123 aa). 2 consecutive ACT domains span residues 693–773 and 800–873; these read EVFV…VKTR and LMEL…ELAP.

This sequence belongs to the GlnD family. Requires Mg(2+) as cofactor.

The catalysed reaction is [protein-PII]-L-tyrosine + UTP = [protein-PII]-uridylyl-L-tyrosine + diphosphate. It carries out the reaction [protein-PII]-uridylyl-L-tyrosine + H2O = [protein-PII]-L-tyrosine + UMP + H(+). Its activity is regulated as follows. Uridylyltransferase (UTase) activity is inhibited by glutamine, while glutamine activates uridylyl-removing (UR) activity. Functionally, modifies, by uridylylation and deuridylylation, the PII regulatory proteins (GlnB and homologs), in response to the nitrogen status of the cell that GlnD senses through the glutamine level. Under low glutamine levels, catalyzes the conversion of the PII proteins and UTP to PII-UMP and PPi, while under higher glutamine levels, GlnD hydrolyzes PII-UMP to PII and UMP (deuridylylation). Thus, controls uridylylation state and activity of the PII proteins, and plays an important role in the regulation of nitrogen assimilation and metabolism. The chain is Bifunctional uridylyltransferase/uridylyl-removing enzyme from Vibrio vulnificus (strain YJ016).